The primary structure comprises 248 residues: Triosephosphate isomerase (248 aa).

Positions 12 and 14 each coordinate substrate. Residues Asn-16–Lys-30 are igE-binding. The active-site Electrophile is the His-95. The active-site Proton acceptor is the Glu-165. IgE-binding stretches follow at residues Pro-166 to Gln-180 and Arg-205 to Glu-219.

It belongs to the triosephosphate isomerase family. As to quaternary structure, homodimer. In terms of tissue distribution, expressed in skeletal muscle (at protein level).

It localises to the cytoplasm. The enzyme catalyses D-glyceraldehyde 3-phosphate = dihydroxyacetone phosphate. The catalysed reaction is dihydroxyacetone phosphate = methylglyoxal + phosphate. Its pathway is carbohydrate biosynthesis; gluconeogenesis. The protein operates within carbohydrate degradation; glycolysis; D-glyceraldehyde 3-phosphate from glycerone phosphate: step 1/1. Its function is as follows. Triosephosphate isomerase is an extremely efficient metabolic enzyme that catalyzes the interconversion between dihydroxyacetone phosphate (DHAP) and D-glyceraldehyde-3-phosphate (G3P) in glycolysis and gluconeogenesis. It is also responsible for the non-negligible production of methylglyoxal a reactive cytotoxic side-product that modifies and can alter proteins, DNA and lipids. The protein is Triosephosphate isomerase of Procambarus clarkii (Red swamp crayfish).